The primary structure comprises 495 residues: Glutamyl-tRNA(Gln) amidotransferase subunit A (495 aa).

Catalysis depends on charge relay system residues K78 and S158. S182 serves as the catalytic Acyl-ester intermediate.

Belongs to the amidase family. GatA subfamily. Heterotrimer of A, B and C subunits.

The catalysed reaction is L-glutamyl-tRNA(Gln) + L-glutamine + ATP + H2O = L-glutaminyl-tRNA(Gln) + L-glutamate + ADP + phosphate + H(+). Its function is as follows. Allows the formation of correctly charged Gln-tRNA(Gln) through the transamidation of misacylated Glu-tRNA(Gln) in organisms which lack glutaminyl-tRNA synthetase. The reaction takes place in the presence of glutamine and ATP through an activated gamma-phospho-Glu-tRNA(Gln). This Dinoroseobacter shibae (strain DSM 16493 / NCIMB 14021 / DFL 12) protein is Glutamyl-tRNA(Gln) amidotransferase subunit A.